We begin with the raw amino-acid sequence, 225 residues long: 3-dehydroquinate dehydratase (225 aa).

3-dehydroquinate-binding positions include 30–32 (EWR) and Arg-62. His-118 (proton donor/acceptor) is an active-site residue. Lys-143 serves as the catalytic Schiff-base intermediate with substrate. 3-dehydroquinate is bound by residues Arg-186 and Gln-209.

The protein belongs to the type-I 3-dehydroquinase family. In terms of assembly, homodimer.

The enzyme catalyses 3-dehydroquinate = 3-dehydroshikimate + H2O. It participates in metabolic intermediate biosynthesis; chorismate biosynthesis; chorismate from D-erythrose 4-phosphate and phosphoenolpyruvate: step 3/7. Involved in the third step of the chorismate pathway, which leads to the biosynthesis of aromatic amino acids. Catalyzes the cis-dehydration of 3-dehydroquinate (DHQ) and introduces the first double bond of the aromatic ring to yield 3-dehydroshikimate. In Streptococcus agalactiae serotype Ia (strain ATCC 27591 / A909 / CDC SS700), this protein is 3-dehydroquinate dehydratase.